We begin with the raw amino-acid sequence, 163 residues long: Peptide methionine sulfoxide reductase MsrA (163 aa).

Cysteine 10 is a catalytic residue.

This sequence belongs to the MsrA Met sulfoxide reductase family.

The enzyme catalyses L-methionyl-[protein] + [thioredoxin]-disulfide + H2O = L-methionyl-(S)-S-oxide-[protein] + [thioredoxin]-dithiol. The catalysed reaction is [thioredoxin]-disulfide + L-methionine + H2O = L-methionine (S)-S-oxide + [thioredoxin]-dithiol. Its function is as follows. Has an important function as a repair enzyme for proteins that have been inactivated by oxidation. Catalyzes the reversible oxidation-reduction of methionine sulfoxide in proteins to methionine. The sequence is that of Peptide methionine sulfoxide reductase MsrA from Ruthia magnifica subsp. Calyptogena magnifica.